A 371-amino-acid polypeptide reads, in one-letter code: Bifunctional enzyme IspD/IspF (371 aa).

Residues 1 to 210 (MLDISLIMLS…LNLPKPSWDI (210 aa)) are 2-C-methyl-D-erythritol 4-phosphate cytidylyltransferase. The 2-C-methyl-D-erythritol 2,4-cyclodiphosphate synthase stretch occupies residues 211-371 (FNGNGFDVHE…NLKYFDWMKL (161 aa)). Residues aspartate 217 and histidine 219 each contribute to the a divalent metal cation site. Residues 217 to 219 (DVH) and 243 to 244 (HS) contribute to the 4-CDP-2-C-methyl-D-erythritol 2-phosphate site. Histidine 251 contacts a divalent metal cation. 4-CDP-2-C-methyl-D-erythritol 2-phosphate contacts are provided by residues 265–267 (DIG), 270–274 (FPDND), 341–344 (TTTE), phenylalanine 348, and arginine 351.

The protein in the N-terminal section; belongs to the IspD/TarI cytidylyltransferase family. IspD subfamily. It in the C-terminal section; belongs to the IspF family. It depends on a divalent metal cation as a cofactor.

It carries out the reaction 2-C-methyl-D-erythritol 4-phosphate + CTP + H(+) = 4-CDP-2-C-methyl-D-erythritol + diphosphate. It catalyses the reaction 4-CDP-2-C-methyl-D-erythritol 2-phosphate = 2-C-methyl-D-erythritol 2,4-cyclic diphosphate + CMP. Its pathway is isoprenoid biosynthesis; isopentenyl diphosphate biosynthesis via DXP pathway; isopentenyl diphosphate from 1-deoxy-D-xylulose 5-phosphate: step 2/6. The protein operates within isoprenoid biosynthesis; isopentenyl diphosphate biosynthesis via DXP pathway; isopentenyl diphosphate from 1-deoxy-D-xylulose 5-phosphate: step 4/6. Bifunctional enzyme that catalyzes the formation of 4-diphosphocytidyl-2-C-methyl-D-erythritol from CTP and 2-C-methyl-D-erythritol 4-phosphate (MEP) (IspD), and catalyzes the conversion of 4-diphosphocytidyl-2-C-methyl-D-erythritol 2-phosphate (CDP-ME2P) to 2-C-methyl-D-erythritol 2,4-cyclodiphosphate (ME-CPP) with a corresponding release of cytidine 5-monophosphate (CMP) (IspF). This chain is Bifunctional enzyme IspD/IspF, found in Campylobacter lari (strain RM2100 / D67 / ATCC BAA-1060).